Consider the following 393-residue polypeptide: S-adenosylmethionine synthase (393 aa).

An ATP-binding site is contributed by His-16. Residue Asp-18 coordinates Mg(2+). Glu-44 lines the K(+) pocket. 2 residues coordinate L-methionine: Glu-57 and Gln-100. Positions Gln-100–His-110 are flexible loop. ATP contacts are provided by residues Asp-167–Lys-169, Arg-238–Phe-239, Asp-247, Arg-253–Lys-254, Ala-270, and Lys-274. Asp-247 serves as a coordination point for L-methionine. L-methionine is bound at residue Lys-278.

This sequence belongs to the AdoMet synthase family. As to quaternary structure, homotetramer; dimer of dimers. Mg(2+) is required as a cofactor. Requires K(+) as cofactor.

It is found in the cytoplasm. It carries out the reaction L-methionine + ATP + H2O = S-adenosyl-L-methionine + phosphate + diphosphate. The protein operates within amino-acid biosynthesis; S-adenosyl-L-methionine biosynthesis; S-adenosyl-L-methionine from L-methionine: step 1/1. Catalyzes the formation of S-adenosylmethionine (AdoMet) from methionine and ATP. The overall synthetic reaction is composed of two sequential steps, AdoMet formation and the subsequent tripolyphosphate hydrolysis which occurs prior to release of AdoMet from the enzyme. In Paracidovorax citrulli (strain AAC00-1) (Acidovorax citrulli), this protein is S-adenosylmethionine synthase.